The following is a 238-amino-acid chain: uncharacterized protein (238 aa).

The chain crosses the membrane as a helical span at residues 10–33 (TLLALMISLSLSSLLLLSISHFYV).

The protein resides in the membrane. This is an uncharacterized protein from Haemophilus influenzae (strain ATCC 51907 / DSM 11121 / KW20 / Rd).